Here is a 284-residue protein sequence, read N- to C-terminus: Circadian clock oscillator protein KaiA (284 aa).

Positions 1-135 (MLSQIAICIW…LRLAPVETMA (135 aa)) are psR domain, binds oxidized quinones. The KaiA N-terminal domain maps to 1-164 (MLSQIAICIW…DLAQRLQERL (164 aa)). The flexible linker stretch occupies residues 165-173 (GYLGVYYKR). The KaiA C-terminal domain maps to 174–282 (DPDRFLRNLP…CEMYRRSIPR (109 aa)).

This sequence belongs to the KaiA family. As to quaternary structure, homodimer. The KaiABC complex composition changes during the circadian cycle to control KaiC phosphorylation. Complexes KaiC(6), KaiA(2-4):KaiC(6), KaiB(6):KaiC(6) and KaiC(6):KaiB(6):KaiA(12) are among the most important forms, many form cooperatively. The KaiA:KaiB complex is only found at 20-24 hours in the circadian cycle (subjective night). Binds to the C-terminal A-loop of KaiC via a coiled-coil structure. KaiA and CikA compete for binding to KaiB(fs). CikA copurifies with this protein in the clock complex. Interacts with LdpA.

Binding of oxidized quinones (produced as darkness falls) prevents KaiA from stimulating KaiC autophosphorylation. Functionally, key component of the KaiABC oscillator complex, which constitutes the main circadian regulator in cyanobacteria. Complex composition changes during the circadian cycle to control KaiC phosphorylation. KaiA stimulates KaiC autophosphorylation, while KaiB sequesters KaiA, leading to KaiC autodephosphorylation. KaiA binding to the KaiC CII domain during the subjective day yields KaiA(2-4):KaiC(6) complexes which stimulate KaiC autophosphorylation. A KaiA dimer is sufficient to enhance KaiC hexamer phosphorylation. Phospho-Ser-431 KaiC accumulation triggers binding of KaiB during the subjective night to form the KaiB(6):KaiC(6) complex, leading to changes in the output regulators CikA and SasA. KaiB(6):KaiC(6) formation exposes a site for KaiA binding on KaiB that sequesters KaiA from KaiC's CII domain, making the KaiC(6):KaiB(6):KaiA(12) complex resulting in KaiC autodephosphorylation. Complete dephosphorylation of KaiC leads to dissociation of KaiA(2):KaiB(1), completing 1 cycle of the Kai oscillator. In terms of biological role, circadian oscillations can be generated in vitro by incubating KaiA, KaiB and KaiC with 1 mM ATP. The cycle is self-sustainable for at least 3 cycles and resistant to temperature changes. A very robust clock is reconstituted with KaiA, KaiB, KaiC, SasA, CikA and RpaA; output is measured by transcription from an appropriate reporter. KaiA binds oxidized quinones via its N-terminal PsR domain and is able to sense redox signals directly; quinone analog DBMIB (2,5-dibromo-3-methyl-6-isopropyl-p-benzoquinone) blocks KaiA stimulation of KaiC phosphorylation. The homodimer binds up to 8 quinones in the crystal structure, 3 in the PsR domain and 1 via the C-terminal helical bundle. Binding of oxidized quinone to the KaiA C-terminal domain reduces the phosphorylation of KaiC slightly; quinones may interact in a complex manner with KaiA to mediate clock input. This Synechococcus elongatus (strain ATCC 33912 / PCC 7942 / FACHB-805) (Anacystis nidulans R2) protein is Circadian clock oscillator protein KaiA.